The following is a 373-amino-acid chain: MILQELQLSHYRNYEELAVTFAPGINVLIGENAQGKTNLLEAIYLLAFTKSHRTAKDRELIGWHQKLARVSGVVERASGRLPLEVQISTSGKRVKVNHLFQKRLSTYVGNLNVVLFAPEDLALVKGAPVNRRQFMDMEFGQMSSKYLYNVSRFNQQLAQRNAYLRQFKYGQQSDRILLGVITDQLASVGGEVVVARQQLVKRLGKWAAELHHHISKQKEELSLQYVSQVEVDDQTTEEEAVAQLRRLYSENEEREIEHGTSLIGPQRDDIHFIVNGQNVQRFGSQGQQRTTALAVKLAEIDLMKEQTGEYPLLLLDDVLSELDDDRQTHLLTAIQDKVQTFITTTSLSGVARQLIHHPTIFTIQSGTLTKEEN.

Residue 30–37 (GENAQGKT) participates in ATP binding.

It belongs to the RecF family.

It is found in the cytoplasm. The RecF protein is involved in DNA metabolism; it is required for DNA replication and normal SOS inducibility. RecF binds preferentially to single-stranded, linear DNA. It also seems to bind ATP. In Limosilactobacillus fermentum (strain NBRC 3956 / LMG 18251) (Lactobacillus fermentum), this protein is DNA replication and repair protein RecF.